The chain runs to 192 residues: Peptidyl-tRNA hydrolase (192 aa).

Tyr-18 is a binding site for tRNA. Residue His-23 is the Proton acceptor of the active site. Positions 69, 71, and 117 each coordinate tRNA.

It belongs to the PTH family. Monomer.

It is found in the cytoplasm. The enzyme catalyses an N-acyl-L-alpha-aminoacyl-tRNA + H2O = an N-acyl-L-amino acid + a tRNA + H(+). Its function is as follows. Hydrolyzes ribosome-free peptidyl-tRNAs (with 1 or more amino acids incorporated), which drop off the ribosome during protein synthesis, or as a result of ribosome stalling. Functionally, catalyzes the release of premature peptidyl moieties from peptidyl-tRNA molecules trapped in stalled 50S ribosomal subunits, and thus maintains levels of free tRNAs and 50S ribosomes. The chain is Peptidyl-tRNA hydrolase from Neisseria meningitidis serogroup A / serotype 4A (strain DSM 15465 / Z2491).